The primary structure comprises 359 residues: Guanine nucleotide-binding protein G(q) subunit alpha (359 aa).

Residues Cys9 and Cys10 are each lipidated (S-palmitoyl cysteine). The G-alpha domain maps to 38–359 (RELKLLLLGT…QLNLKEYNLV (322 aa)). A G1 motif region spans residues 41–54 (KLLLLGTGESGKST). 9 residues coordinate GTP: Ser50, Gly51, Lys52, Ser53, Thr54, Ser156, Leu180, Arg181, and Arg183. Residue Ser53 coordinates Mg(2+). A G2 motif region spans residues 178-186 (DVLRVRVPT). Thr186 lines the Mg(2+) pocket. Residues 201-210 (FRMVDVGGQR) form a G3 motif region. At Gln209 the chain carries 5-glutamyl histamine. Positions 270-277 (ILFLNKKD) are G4 motif. Asn274, Lys275, Asp277, and Ala331 together coordinate GTP. Residues 329 to 334 (TCATDT) form a G5 motif region.

Belongs to the G-alpha family. G(q) subfamily. In terms of assembly, g proteins are composed of 3 units; alpha, beta and gamma. The alpha chain contains the guanine nucleotide binding site. Interacts (GDP-bound form) with RIC8A (via C-terminus); promoting GNAQ folding and association with the plasma membrane. Binds NHERF1. Forms a complex with PECAM1 and BDKRB2. Interacts with GAS2L2. In terms of processing, palmitoylated by ZDHHC3 and ZDHHC7. Palmitoylation occurs in the Golgi and participates in the localization of GNAQ to the plasma membrane. Histaminylated at Gln-209 residues by TGM2.

It localises to the cell membrane. The protein localises to the golgi apparatus. The protein resides in the nucleus. It is found in the nucleus membrane. It carries out the reaction GTP + H2O = GDP + phosphate + H(+). In terms of biological role, guanine nucleotide-binding proteins (G proteins) function as transducers downstream of G protein-coupled receptors (GPCRs) in numerous signaling cascades. The alpha chain contains the guanine nucleotide binding site and alternates between an active, GTP-bound state and an inactive, GDP-bound state. Signaling by an activated GPCR promotes GDP release and GTP binding. The alpha subunit has a low GTPase activity that converts bound GTP to GDP, thereby terminating the signal. Both GDP release and GTP hydrolysis are modulated by numerous regulatory proteins. Signaling is mediated via phospholipase C-beta-dependent inositol lipid hydrolysis for signal propagation: activates phospholipase C-beta: following GPCR activation, GNAQ activates PLC-beta (PLCB1, PLCB2, PLCB3 or PLCB4), leading to production of diacylglycerol (DAG) and inositol 1,4,5-trisphosphate (IP3). Required for platelet activation. Regulates B-cell selection and survival and is required to prevent B-cell-dependent autoimmunity. Regulates chemotaxis of BM-derived neutrophils and dendritic cells (in vitro). Transduces FFAR4 signaling in response to long-chain fatty acids (LCFAs). Together with GNA11, required for heart development. The polypeptide is Guanine nucleotide-binding protein G(q) subunit alpha (Gnaq) (Mus musculus (Mouse)).